We begin with the raw amino-acid sequence, 371 residues long: Cytochrome b (371 aa).

Transmembrane regions (helical) follow at residues 25 to 45 (FGSM…FLAV), 69 to 90 (WMMQ…YIHI), 105 to 125 (WMSG…GYVL), and 170 to 190 (FFAL…LHII). The heme b site is built by histidine 75 and histidine 89. Residues histidine 174 and histidine 188 each contribute to the heme b site. Residue histidine 193 participates in a ubiquinone binding. Transmembrane regions (helical) follow at residues 218 to 238 (HKDL…SSFF), 280 to 300 (LGGA…PFTH), 312 to 332 (LSQL…WAAT), and 339 to 358 (FIVI…LSTP).

The protein belongs to the cytochrome b family. In terms of assembly, the cytochrome bc1 complex contains 3 respiratory subunits (MT-CYB, CYC1 and UQCRFS1), 2 core proteins (UQCRC1 and UQCRC2) and probably 6 low-molecular weight proteins. Requires heme b as cofactor.

Its subcellular location is the mitochondrion inner membrane. Component of the ubiquinol-cytochrome c reductase complex (complex III or cytochrome b-c1 complex) that is part of the mitochondrial respiratory chain. The b-c1 complex mediates electron transfer from ubiquinol to cytochrome c. Contributes to the generation of a proton gradient across the mitochondrial membrane that is then used for ATP synthesis. This chain is Cytochrome b (MT-CYB), found in Aspidites melanocephalus (Black-headed python).